The following is a 459-amino-acid chain: GPI-anchored wall transfer protein 1 (459 aa).

A glycan (N-linked (GlcNAc...) asparagine) is linked at asparagine 13. Helical transmembrane passes span 20 to 40, 50 to 70, 73 to 93, 120 to 140, 156 to 176, 188 to 208, 221 to 241, 250 to 270, 290 to 310, 331 to 351, 364 to 384, 405 to 425, and 432 to 452; these read IETC…VNMT, LGFL…IYVS, VGVF…HVIS, IAGV…CILA, WGTS…GTVA, FKNV…RMFL, YGMH…VFFF, YFNL…LTPF, IASL…GSVV, LFPL…SVGV, VAFI…YLFP, LLVF…FDTL, and GLTI…WLAQ.

The protein belongs to the PIGW family.

Its subcellular location is the endoplasmic reticulum membrane. The protein operates within glycolipid biosynthesis; glycosylphosphatidylinositol-anchor biosynthesis. Probable acetyltransferase, which acetylates the inositol ring of phosphatidylinositol during biosynthesis of GPI-anchor. Has a role in meiosis. This chain is GPI-anchored wall transfer protein 1 (gwt1), found in Schizosaccharomyces pombe (strain 972 / ATCC 24843) (Fission yeast).